A 649-amino-acid chain; its full sequence is Threonine--tRNA ligase (649 aa).

The region spanning methionine 1 to threonine 60 is the TGS domain. The interval aspartate 248–proline 544 is catalytic. Zn(2+) contacts are provided by cysteine 341, histidine 392, and histidine 521.

It belongs to the class-II aminoacyl-tRNA synthetase family. In terms of assembly, homodimer. The cofactor is Zn(2+).

Its subcellular location is the cytoplasm. It carries out the reaction tRNA(Thr) + L-threonine + ATP = L-threonyl-tRNA(Thr) + AMP + diphosphate + H(+). Functionally, catalyzes the attachment of threonine to tRNA(Thr) in a two-step reaction: L-threonine is first activated by ATP to form Thr-AMP and then transferred to the acceptor end of tRNA(Thr). Also edits incorrectly charged L-seryl-tRNA(Thr). This chain is Threonine--tRNA ligase, found in Deinococcus radiodurans (strain ATCC 13939 / DSM 20539 / JCM 16871 / CCUG 27074 / LMG 4051 / NBRC 15346 / NCIMB 9279 / VKM B-1422 / R1).